Here is a 68-residue protein sequence, read N- to C-terminus: ATP synthase F(0) complex subunit 8 (68 aa).

The chain crosses the membrane as a helical span at residues 8-21; that stretch reads VWPTMITPMLLTLF. Position 54 is an N6-acetyllysine; alternate (lysine 54). Lysine 54 bears the N6-succinyllysine; alternate mark. N6-acetyllysine is present on lysine 57.

It belongs to the ATPase protein 8 family. In terms of assembly, component of the ATP synthase complex composed at least of ATP5F1A/subunit alpha, ATP5F1B/subunit beta, ATP5MC1/subunit c (homooctomer), MT-ATP6/subunit a, MT-ATP8/subunit 8, ATP5ME/subunit e, ATP5MF/subunit f, ATP5MG/subunit g, ATP5MK/subunit k, ATP5MJ/subunit j, ATP5F1C/subunit gamma, ATP5F1D/subunit delta, ATP5F1E/subunit epsilon, ATP5PF/subunit F6, ATP5PB/subunit b, ATP5PD/subunit d, ATP5PO/subunit OSCP. ATP synthase complex consists of a soluble F(1) head domain (subunits alpha(3) and beta(3)) - the catalytic core - and a membrane F(0) domain - the membrane proton channel (subunits c, a, 8, e, f, g, k and j). These two domains are linked by a central stalk (subunits gamma, delta, and epsilon) rotating inside the F1 region and a stationary peripheral stalk (subunits F6, b, d, and OSCP). Interacts with PRICKLE3.

It localises to the mitochondrion membrane. In terms of biological role, subunit 8, of the mitochondrial membrane ATP synthase complex (F(1)F(0) ATP synthase or Complex V) that produces ATP from ADP in the presence of a proton gradient across the membrane which is generated by electron transport complexes of the respiratory chain. ATP synthase complex consist of a soluble F(1) head domain - the catalytic core - and a membrane F(1) domain - the membrane proton channel. These two domains are linked by a central stalk rotating inside the F(1) region and a stationary peripheral stalk. During catalysis, ATP synthesis in the catalytic domain of F(1) is coupled via a rotary mechanism of the central stalk subunits to proton translocation. In vivo, can only synthesize ATP although its ATP hydrolase activity can be activated artificially in vitro. Part of the complex F(0) domain. The chain is ATP synthase F(0) complex subunit 8 from Homo sapiens (Human).